We begin with the raw amino-acid sequence, 1276 residues long: Botulinum neurotoxin type D (1276 aa).

Histidine 229 provides a ligand contact to Zn(2+). Glutamate 230 is a catalytic residue. Zn(2+) contacts are provided by histidine 233 and glutamate 269. The cysteines at positions 437 and 450 are disulfide-linked. A translocation domain (TD) region spans residues 443 to 862 (NSRDDSTCIK…LKDIINEYFN (420 aa)). Residues 458 to 547 (LPYVADKDSI…DYLNSYYYLE (90 aa)) form a belt region. The N-terminus of receptor binding domain (N-RBD), Hcn stretch occupies residues 863 to 1082 (SINDSKILSL…NIVYEGQILR (220 aa)). A C-terminus of receptor binding domain (C-RBD), Hcc region spans residues 1083-1276 (NVIKDYWGNP…FISRDPGWVE (194 aa)). N-acetyl-beta-neuraminate is bound by residues threonine 1172, aspartate 1173, lysine 1192, and arginine 1239. The interval 1235 to 1245 (YKPWRFSFKNA) is ganglioside-binding loop. Residues 1252–1255 (TNYE) carry the Host ganglioside-binding motif motif.

It belongs to the peptidase M27 family. In terms of assembly, heterodimer; disulfide-linked heterodimer of a light chain (LC) and a heavy chain (HC). The LC has the proteolytic/pharmacological activity. The N- and C-termini of the HC mediate channel formation and eukaryotic host cell binding, respectively. Can also be purified in complex with a non-toxic component that is larger than the HC. Single chain toxin from strain D-4947 copurifies with NTHNA, and in complexes that include NTNHA, HA-70, HA-33 and HA-17. Dichain toxin from strain CB-16 phage d-16 phi copurifies with NTHNA, and in complexes that include NTNHA, HA-55, HA-33, HA-22 and HA-17. The stoichiometry of the whole complex has been modeled as one BoNT/D, one NTNHA, three HA-70, six HA-33 and three HA-17. HC interacts with eukaryotic protein synaptic vesicle glycoprotein 2B (SV2B), which may serve as its receptor. Another group does not find a convincing interaction with SV2. Zn(2+) serves as cofactor.

Its subcellular location is the secreted. It catalyses the reaction Limited hydrolysis of proteins of the neuroexocytosis apparatus, synaptobrevins, SNAP25 or syntaxin. No detected action on small molecule substrates.. With respect to regulation, inhibited by dipicolinic acid, captopril, 1,10-phenanthroline and EDTA. Its function is as follows. Botulinum toxin causes flaccid paralysis by inhibiting neurotransmitter (acetylcholine) release from the presynaptic membranes of nerve terminals of the eukaryotic host skeletal and autonomic nervous system, with frequent heart or respiratory failure. Precursor of botulinum neurotoxin D for which a proteinaceous coreceptor is controversial. In double SV2A/SV2B knockout mice this toxin does not degrade its synaptobrevin target; introducing SV2A, SV2B or SV2C restores target cleavage. Recognition of SV2 by this toxin does not occur via SV2 glycosylation or its large extracellular loop 4. Another group does not find a convincing interaction with SV2. Thus a protein receptor for this BoNT serotype has yet to be definitively proven. Recognizes at least 1 complex polysialylated ganglioside found on neural tissue. Electrical stimulation increases uptake of toxin in an ex vivo assay, presumably by transiently exposing a receptor usually found in eukaryotic target synaptic vesicles. Upon synaptic vesicle recycling the toxin is taken up via the endocytic pathway; when the pH of the toxin-containing endosome drops a structural rearrangement occurs so that the N-terminus of the heavy chain (HC) forms pores that allows the light chain (LC) to translocate into the cytosol. Once in the cytosol the disulfide bond linking the 2 subunits is reduced and LC cleaves its target protein on synaptic vesicles, preventing their fusion with the cytoplasmic membrane and thus neurotransmitter release. Requires complex eukaryotic host polysialogangliosides for full neurotoxicity and for binding to neurons. Functionally, has proteolytic activity. After translocation into the eukaryotic host cytosol, inhibits neurotransmitter release by acting as a zinc endopeptidase that cleaves the '61-Lys-|-Leu-62' bond of synaptobrevin-1 (VAMP1), and the equivalent 'Lys-|-Leu' sites in VAMP2 and VAMP3. Cleaves the '49-Lys-|-Ile-50' bond of A.californica synaptobrevin (AC P35589). This chain probably has to be partially unfolded to translocate into the eukaryotic host cell cytosol. Responsible for host epithelial cell transcytosis, host nerve cell targeting and translocation of light chain (LC) into eukaryotic host cell cytosol. Composed of 3 subdomains; the translocation domain (TD), and N-terminus and C-terminus of the receptor-binding domain (RBD). The RBD is responsible for the adherence of the toxin to the eukaryotic target cell surface. The N-terminus of the TD wraps an extended belt around the perimeter of the LC, protecting Zn(2+) in the active site; it may also prevent premature LC dissociation from the translocation channel and protect toxin prior to translocation. The TD inserts into synaptic vesicle membrane to allow translocation into the host cytosol. The RBD binds eukaryotic host phosphatidylethanolamine, which may serve as toxin receptor. Treatment of synaptosomes with proteinase K does not reduce HC binding, suggesting there is no protein receptor or it is protected from extracellular proteases. HC significantly decreases uptake and toxicity of whole BoNT/D. HC also interferes with uptake of tetanus toxin. Has 2 closely located carbohydrate-binding receptor sites and binds at least 1 GT1b ganglioside. Bind gangliosides in the order GD2 &gt; GT1b &gt; GD1b. Interacts with eukaryotic target protein SV2B (synaptic vesicle glycoprotein 2B). Expression of SV2A, SV2B or SV2C in mice knocked-out for the SV2 proteins restores entry of BoNT/D and cleavage of VAMP2, suggesting SV2 acts as its receptor. Unlike BoNT/A and BoNT/E, toxin uptake is not mediated by large extracellular loop 4 of SV2. Another group finds very poor interaction with SV2 proteins, suggesting the possible protein receptor may not have been identified. The chain is Botulinum neurotoxin type D (botD) from Clostridium botulinum (Clostridium botulinum D bacteriophage).